The primary structure comprises 352 residues: MAIVSSSAGRADSQPPAAKSRVVDASPLPEEASPAREDGLRPRRLEDYIGQRELKQVLAIAVKAAMGRGDALDHVLLYGPPGLGKTTMAMVLAEELGVKCRVTSAPALERPRDIVGLLVNLQPREVLFIDEIHRLTRVAEELLYPAMEDRRLDLTVGKGSTARTRALELPPFTLVGATTRAGALSSPLRDRFGLIQRLEFYGLEDLQAIVERAAGLLRLQLTAQACQEIARRCRGTPRIANRLLRRVRDVASVCGGESLIDAALVDEALTLHRVDARGLDASDRRLLDLLLESHGGGPVGLETLAAALGEDPATLEAVVEPFLLQLGFLQRTPRGRVVTGAGRRHLGWPELP.

The tract at residues 1-42 (MAIVSSSAGRADSQPPAAKSRVVDASPLPEEASPAREDGLRP) is disordered. The interval 13–201 (SQPPAAKSRV…FGLIQRLEFY (189 aa)) is large ATPase domain (RuvB-L). Residues 33 to 42 (SPAREDGLRP) are compositionally biased toward basic and acidic residues. ATP-binding residues include Leu-40, Arg-41, Gly-82, Lys-85, Thr-86, Thr-87, Arg-191, Tyr-201, and Arg-238. Thr-86 lines the Mg(2+) pocket. The segment at 202-273 (GLEDLQAIVE…LVDEALTLHR (72 aa)) is small ATPAse domain (RuvB-S). Residues 276–352 (ARGLDASDRR…RRHLGWPELP (77 aa)) form a head domain (RuvB-H) region. The DNA site is built by Arg-331 and Arg-336.

The protein belongs to the RuvB family. In terms of assembly, homohexamer. Forms an RuvA(8)-RuvB(12)-Holliday junction (HJ) complex. HJ DNA is sandwiched between 2 RuvA tetramers; dsDNA enters through RuvA and exits via RuvB. An RuvB hexamer assembles on each DNA strand where it exits the tetramer. Each RuvB hexamer is contacted by two RuvA subunits (via domain III) on 2 adjacent RuvB subunits; this complex drives branch migration. In the full resolvosome a probable DNA-RuvA(4)-RuvB(12)-RuvC(2) complex forms which resolves the HJ.

It is found in the cytoplasm. The catalysed reaction is ATP + H2O = ADP + phosphate + H(+). In terms of biological role, the RuvA-RuvB-RuvC complex processes Holliday junction (HJ) DNA during genetic recombination and DNA repair, while the RuvA-RuvB complex plays an important role in the rescue of blocked DNA replication forks via replication fork reversal (RFR). RuvA specifically binds to HJ cruciform DNA, conferring on it an open structure. The RuvB hexamer acts as an ATP-dependent pump, pulling dsDNA into and through the RuvAB complex. RuvB forms 2 homohexamers on either side of HJ DNA bound by 1 or 2 RuvA tetramers; 4 subunits per hexamer contact DNA at a time. Coordinated motions by a converter formed by DNA-disengaged RuvB subunits stimulates ATP hydrolysis and nucleotide exchange. Immobilization of the converter enables RuvB to convert the ATP-contained energy into a lever motion, pulling 2 nucleotides of DNA out of the RuvA tetramer per ATP hydrolyzed, thus driving DNA branch migration. The RuvB motors rotate together with the DNA substrate, which together with the progressing nucleotide cycle form the mechanistic basis for DNA recombination by continuous HJ branch migration. Branch migration allows RuvC to scan DNA until it finds its consensus sequence, where it cleaves and resolves cruciform DNA. The polypeptide is Holliday junction branch migration complex subunit RuvB (Prochlorococcus marinus (strain MIT 9313)).